A 775-amino-acid chain; its full sequence is Polyribonucleotide nucleotidyltransferase (775 aa).

2 residues coordinate Mg(2+): aspartate 487 and aspartate 493. Residues 554–613 form the KH domain; that stretch reads PKVEVVDVPEEKAPLIIGPGGSTVKKIYDETGVKVWVGEQGKVYLFVFPGGDVEKAKQMI. S1 motif domains lie at 623 to 693 and 707 to 775; these read GAVY…IGIE and GDVY…TDDV.

It belongs to the polyribonucleotide nucleotidyltransferase family. Requires Mg(2+) as cofactor.

The protein resides in the cytoplasm. It carries out the reaction RNA(n+1) + phosphate = RNA(n) + a ribonucleoside 5'-diphosphate. Involved in mRNA degradation. Catalyzes the phosphorolysis of single-stranded polyribonucleotides processively in the 3'- to 5'-direction. In Aquifex aeolicus (strain VF5), this protein is Polyribonucleotide nucleotidyltransferase.